Consider the following 214-residue polypeptide: Dimethylamine corrinoid protein 2 (214 aa).

Residues Met1–Lys91 enclose the B12-binding N-terminal domain. The B12-binding domain occupies Leu92 to Leu214. His105 contacts methylcob(III)alamin.

Belongs to the methylamine corrinoid protein family.

Its pathway is one-carbon metabolism; methanogenesis from dimethylamine. Its function is as follows. Acts as a methyl group carrier between MtbB and MtbA. This Methanosarcina mazei (strain ATCC BAA-159 / DSM 3647 / Goe1 / Go1 / JCM 11833 / OCM 88) (Methanosarcina frisia) protein is Dimethylamine corrinoid protein 2 (mtbC2).